The primary structure comprises 258 residues: TLC domain-containing protein 4 A (258 aa).

The next 7 helical transmembrane spans lie at 8–28 (YLIS…YIWI), 49–71 (IEWT…SCYC), 92–112 (FILK…IIYY), 118–138 (WPII…IGLY), 144–164 (LTLL…MKWF), 170–190 (LENH…FIFI), and 217–237 (IIFF…YLVI). The 200-residue stretch at 46-245 (SSKIEWTNKI…VIKGILKHLS (200 aa)) folds into the TLC domain.

This sequence belongs to the TLCD4 family.

The protein localises to the membrane. The chain is TLC domain-containing protein 4 A (tlcd4a) from Dictyostelium discoideum (Social amoeba).